We begin with the raw amino-acid sequence, 62 residues long: Small ribosomal subunit protein eS27 (62 aa).

Positions 17, 20, 36, and 39 each coordinate Zn(2+). The C4-type zinc finger occupies 17–39 (CPDCDNEQTVFSKASTTVKCVVC).

It belongs to the eukaryotic ribosomal protein eS27 family. As to quaternary structure, part of the 30S ribosomal subunit. The cofactor is Zn(2+).

In Methanoregula boonei (strain DSM 21154 / JCM 14090 / 6A8), this protein is Small ribosomal subunit protein eS27.